The sequence spans 328 residues: tRNA uridine(34) hydroxylase (328 aa).

The region spanning 122–218 (QENRCLVLDV…YGLKMGTGKW (97 aa)) is the Rhodanese domain. Cys-178 functions as the Cysteine persulfide intermediate in the catalytic mechanism.

The protein belongs to the TrhO family.

The enzyme catalyses uridine(34) in tRNA + AH2 + O2 = 5-hydroxyuridine(34) in tRNA + A + H2O. Functionally, catalyzes oxygen-dependent 5-hydroxyuridine (ho5U) modification at position 34 in tRNAs. The sequence is that of tRNA uridine(34) hydroxylase from Chlamydia muridarum (strain MoPn / Nigg).